Consider the following 337-residue polypeptide: Putative NAC domain-containing protein 94 (337 aa).

The 172-residue stretch at 20–191 (VLPGFRFHPT…AWAICRIFKK (172 aa)) folds into the NAC domain.

It is found in the nucleus. In Arabidopsis thaliana (Mouse-ear cress), this protein is Putative NAC domain-containing protein 94 (ANAC094).